The primary structure comprises 117 residues: Colipase (117 aa).

The first 22 residues, 1–22 (MNIFNILLPIVVLLLVFGLTAA), serve as a signal peptide directing secretion. 5 cysteine pairs are disulfide-bonded: Cys39-Cys50, Cys45-Cys61, Cys49-Cys83, Cys71-Cys91, and Cys85-Cys109.

The protein belongs to the colipase family. As to quaternary structure, forms a 1:1 stoichiometric complex with pancreatic lipase.

The protein resides in the secreted. Its function is as follows. Colipase is a cofactor of pancreatic lipase. It allows the lipase to anchor itself to the lipid-water interface. Without colipase the enzyme is washed off by bile salts, which have an inhibitory effect on the lipase. This is Colipase (clps) from Xenopus tropicalis (Western clawed frog).